A 386-amino-acid polypeptide reads, in one-letter code: Microtubule-binding protein TANGLED1 (386 aa).

5 disordered regions span residues R83 to G105, A140 to S202, H244 to L266, P303 to S330, and R345 to R386. A compositionally biased stretch (basic residues) spans R170–H180. The span at R181–T193 shows a compositional bias: low complexity. Residues T375–R386 are compositionally biased toward polar residues.

In terms of tissue distribution, expressed in vegetative shoot tips consisting of leaf primordia and the bases of immature leaves, the shoot apical meristem, and unexpanded stem tissue. Strongly expressed in tissues enriched in dividing cells: ear primordia and embryos.

The protein resides in the cytoplasm. The protein localises to the cytoskeleton. It localises to the spindle. Its subcellular location is the phragmoplast. Functionally, is required for spatial control cell division during leaf development. Through an association with microtubules, acts both for the positioning of cytoskeletal arrays that establish planes of cell division during prophase and for spatial guidance of expanding phragmoplasts toward preestablished cortical division sites (CDS) during cytokinesis. The sequence is that of Microtubule-binding protein TANGLED1 (TAN1) from Zea mays (Maize).